The sequence spans 555 residues: Probable metabolite transport protein YDR387C (555 aa).

Residues 1–39 lie on the Cytoplasmic side of the membrane; it reads MSTDESEDVYSDLYSIISQVTSNTANDIEQLPYALTFKT. A helical membrane pass occupies residues 40-60; it reads SLIFVGATIGGLLFGYDTGVI. Over 61–83 the chain is Extracellular; that stretch reads SGVLLSLKPEDLSLVVLTDVQKE. The chain crosses the membrane as a helical span at residues 84–104; it reads LITSSTSVGSFFGSILAFPLA. The Cytoplasmic portion of the chain corresponds to 105–118; sequence DRYGRRITLAICCS. A helical membrane pass occupies residues 119–139; it reads IFILAAIGMAIARTLTFLICG. Residue Arg140 is a topological domain, extracellular. The chain crosses the membrane as a helical span at residues 141–161; it reads LLVGIAVGVSAQCVPLFLSEI. The Cytoplasmic portion of the chain corresponds to 162–168; the sequence is SPSRIRG. A helical membrane pass occupies residues 169-189; the sequence is FMLTLNIIAITGGQLVSYVIA. At 190-200 the chain is on the extracellular side; the sequence is SLMKEIDNSWR. A helical membrane pass occupies residues 201–221; that stretch reads YLFALSAIPAILFLSILDFIP. The Cytoplasmic segment spans residues 222 to 356; sequence ESPRWSISKG…TIRALIVGCM (135 aa). Residues 289-313 form a disordered region; it reads SSTSGTLSPPNIKRLSSNTERTSNT. A helical membrane pass occupies residues 357–377; the sequence is LMFFQQITGFNAFMYYAAIIF. Residues 378–384 are Extracellular-facing; sequence SKFNIKN. A helical transmembrane segment spans residues 385-405; sequence PLLPPILIASTNFIFTFFAMY. Over 406–413 the chain is Cytoplasmic; sequence TMDSLGRR. Residues 414-434 form a helical membrane-spanning segment; it reads AILLRTILIMTVGLLLCSVGF. The Extracellular portion of the chain corresponds to 435–440; sequence GHDQVN. A helical transmembrane segment spans residues 441–461; the sequence is LLLISVVIYVAAYASAMGSVP. Topologically, residues 462-474 are cytoplasmic; the sequence is WTCVEFLPLNRRS. The helical transmembrane segment at 475-497 threads the bilayer; it reads FGASCIACTNWLTNAFVSMTYLS. The Extracellular segment spans residues 498–506; the sequence is TINTIGDEN. A helical transmembrane segment spans residues 507-527; that stretch reads TMLIFAFFTVCAWFFVYFWYP. Topologically, residues 528 to 555 are cytoplasmic; that stretch reads EVKGLSLEEVGRVFDNGIDVHYVFRTYH.

The protein belongs to the major facilitator superfamily. Sugar transporter (TC 2.A.1.1) family.

The protein resides in the membrane. This is Probable metabolite transport protein YDR387C from Saccharomyces cerevisiae (strain ATCC 204508 / S288c) (Baker's yeast).